A 150-amino-acid chain; its full sequence is Ribosomal RNA large subunit methyltransferase H (150 aa).

S-adenosyl-L-methionine is bound by residues alanine 100 and 118 to 123 (LSEMTF).

It belongs to the RNA methyltransferase RlmH family. As to quaternary structure, homodimer.

It localises to the cytoplasm. It catalyses the reaction pseudouridine(1915) in 23S rRNA + S-adenosyl-L-methionine = N(3)-methylpseudouridine(1915) in 23S rRNA + S-adenosyl-L-homocysteine + H(+). Functionally, specifically methylates the pseudouridine at position 1915 (m3Psi1915) in 23S rRNA. This chain is Ribosomal RNA large subunit methyltransferase H, found in Helicobacter pylori (strain HPAG1).